The chain runs to 138 residues: Putative pre-16S rRNA nuclease (138 aa).

This sequence belongs to the YqgF nuclease family.

It is found in the cytoplasm. Its function is as follows. Could be a nuclease involved in processing of the 5'-end of pre-16S rRNA. This is Putative pre-16S rRNA nuclease from Cronobacter sakazakii (strain ATCC BAA-894) (Enterobacter sakazakii).